The sequence spans 340 residues: Glycerol-3-phosphate dehydrogenase [NAD(P)+] (340 aa).

Residues S14, F15, R35, and K109 each contribute to the NADPH site. Residues K109 and G137 each contribute to the sn-glycerol 3-phosphate site. A141 is a binding site for NADPH. Residues K192, D245, S255, R256, and N257 each coordinate sn-glycerol 3-phosphate. The active-site Proton acceptor is K192. R256 provides a ligand contact to NADPH. Residues V280 and E282 each contribute to the NADPH site.

It belongs to the NAD-dependent glycerol-3-phosphate dehydrogenase family.

It is found in the cytoplasm. The enzyme catalyses sn-glycerol 3-phosphate + NAD(+) = dihydroxyacetone phosphate + NADH + H(+). It carries out the reaction sn-glycerol 3-phosphate + NADP(+) = dihydroxyacetone phosphate + NADPH + H(+). It participates in membrane lipid metabolism; glycerophospholipid metabolism. In terms of biological role, catalyzes the reduction of the glycolytic intermediate dihydroxyacetone phosphate (DHAP) to sn-glycerol 3-phosphate (G3P), the key precursor for phospholipid synthesis. This is Glycerol-3-phosphate dehydrogenase [NAD(P)+] from Teredinibacter turnerae (strain ATCC 39867 / T7901).